We begin with the raw amino-acid sequence, 582 residues long: Hemagglutinin-neuraminidase (582 aa).

Over 1–34 the chain is Intravirion; the sequence is MEPSKLFTISDNATFAPGPVNNAADKKTFRTCFR. Residues 35–55 traverse the membrane as a helical; Signal-anchor for type II membrane protein segment; that stretch reads ILVLSVQAVTLILVIVTLGEL. Topologically, residues 56–582 are virion surface; sequence VRMINDQGLS…LPVLTRLTIT (527 aa). Asn-127 carries N-linked (GlcNAc...) asparagine; by host glycosylation. 3 disulfide bridges follow: Cys-178–Cys-202, Cys-192–Cys-253, and Cys-244–Cys-257. The involved in neuraminidase activity stretch occupies residues 240-245; sequence NRKSCS. 2 N-linked (GlcNAc...) asparagine; by host glycosylation sites follow: Asn-284 and Asn-329. Cystine bridges form between Cys-350–Cys-471, Cys-382–Cys-392, and Cys-465–Cys-475. Asn-400 and Asn-448 each carry an N-linked (GlcNAc...) asparagine; by host glycan. A glycan (N-linked (GlcNAc...) asparagine; by host) is linked at Asn-507. A disulfide bridge connects residues Cys-545 and Cys-556.

Belongs to the paramyxoviruses hemagglutinin-neuraminidase family. As to quaternary structure, homotetramer; composed of disulfide-linked homodimers. Interacts with F protein trimer.

It is found in the virion membrane. It localises to the host cell membrane. The enzyme catalyses Hydrolysis of alpha-(2-&gt;3)-, alpha-(2-&gt;6)-, alpha-(2-&gt;8)- glycosidic linkages of terminal sialic acid residues in oligosaccharides, glycoproteins, glycolipids, colominic acid and synthetic substrates.. Attaches the virus to alpha-2,3-linked sialic acid-containing cell receptors and thereby initiating infection. Binding of HN protein to the receptor induces a conformational change that allows the F protein to trigger virion/cell membranes fusion. Binds to the glycan motifs sialyl Lewis (SLe) and GM2 ganglioside (GM2-glycan). Its function is as follows. Neuraminidase activity ensures the efficient spread of the virus by dissociating the mature virions from the neuraminic acid containing glycoproteins. In Mumps virus (strain RW) (MuV), this protein is Hemagglutinin-neuraminidase (HN).